The sequence spans 445 residues: Baccatin III:3-amino-3-phenylpropanoyltransferase (445 aa).

This sequence belongs to the plant acyltransferase family.

The catalysed reaction is (3R)-3-amino-3-phenylpropanoyl-CoA + baccatin III = 3'-N-debenzoyl-2'-deoxytaxol + CoA. Its pathway is alkaloid biosynthesis; taxol biosynthesis. Its function is as follows. Acyltransferase involved in taxol biosynthesis. Catalyzes the selective 13-O-acylation of baccatin III with (3R)-3-amino-3-phenylpropanoyl-CoA as the acyl donor to form 3'-N-debenzoyl-2'-deoxytaxol. This chain is Baccatin III:3-amino-3-phenylpropanoyltransferase, found in Taxus cuspidata (Japanese yew).